We begin with the raw amino-acid sequence, 356 residues long: MRVTDFSFELPESLIAHYPMPERSSCRLLSLDGPTGALTHGTFTDLLDKLNPGDLLVFNNTRVIPARLFGRKASGGKIEVLVERMLDDKRILAHIRASKAPKPGAELLLGDDESINATMTARHGALFEVEFNDDRSVLDILNSIGHMPLPPYIDRPDEDADRELYQTVYSEKPGAVAAPTAGLHFDEPLLEKLRAKGVEMAFVTLHVGAGTFQPVRVDTIEDHIMHSEYAEVPQDMVDAVLAAKARGNRVIAVGTTSVRSLESAAQAAKNDLIEPFFDDTQIFIYPGFQYKVVDALVTNFHLPESTLIMLVSAFAGYQHTMNAYKAAVEEKYRFFSYGDAMFITYNPQAINERVGE.

This sequence belongs to the QueA family. In terms of assembly, monomer.

The protein resides in the cytoplasm. It carries out the reaction 7-aminomethyl-7-carbaguanosine(34) in tRNA + S-adenosyl-L-methionine = epoxyqueuosine(34) in tRNA + adenine + L-methionine + 2 H(+). Its pathway is tRNA modification; tRNA-queuosine biosynthesis. Its function is as follows. Transfers and isomerizes the ribose moiety from AdoMet to the 7-aminomethyl group of 7-deazaguanine (preQ1-tRNA) to give epoxyqueuosine (oQ-tRNA). This Shigella boydii serotype 18 (strain CDC 3083-94 / BS512) protein is S-adenosylmethionine:tRNA ribosyltransferase-isomerase.